The following is a 391-amino-acid chain: UPF0229 protein BCB4264_A0587 (391 aa).

Positions 1-16 (MGEENQPNYTISQENW) are enriched in polar residues. Disordered regions lie at residues 1–31 (MGEE…RHQE) and 80–117 (HVGQ…GDAA). The span at 21–31 (KGYDDQQRHQE) shows a compositional bias: basic and acidic residues. Gly residues predominate over residues 98-115 (GSGGQKQKGPGKGQGAGD).

The protein belongs to the UPF0229 family.

This chain is UPF0229 protein BCB4264_A0587, found in Bacillus cereus (strain B4264).